The following is a 216-amino-acid chain: Octanoyltransferase (216 aa).

One can recognise a BPL/LPL catalytic domain in the interval A33–G216. Substrate is bound by residues R72 to H79, A148 to G150, and G162 to S164. Residue C180 is the Acyl-thioester intermediate of the active site.

It belongs to the LipB family.

It localises to the cytoplasm. The enzyme catalyses octanoyl-[ACP] + L-lysyl-[protein] = N(6)-octanoyl-L-lysyl-[protein] + holo-[ACP] + H(+). The protein operates within protein modification; protein lipoylation via endogenous pathway; protein N(6)-(lipoyl)lysine from octanoyl-[acyl-carrier-protein]: step 1/2. Catalyzes the transfer of endogenously produced octanoic acid from octanoyl-acyl-carrier-protein onto the lipoyl domains of lipoate-dependent enzymes. Lipoyl-ACP can also act as a substrate although octanoyl-ACP is likely to be the physiological substrate. The chain is Octanoyltransferase from Herminiimonas arsenicoxydans.